A 676-amino-acid polypeptide reads, in one-letter code: Methionine--tRNA ligase (676 aa).

Positions 11-21 match the 'HIGH' region motif; sequence PYANGPCHLGH. Zn(2+)-binding residues include cysteine 143, cysteine 146, cysteine 156, and cysteine 159. The short motif at 326–330 is the 'KMSKS' region element; it reads KMSTS. Threonine 329 lines the ATP pocket. One can recognise a tRNA-binding domain in the interval 581 to 676; the sequence is EFGKVKLVVG…TEGNVGEYIK (96 aa).

The protein belongs to the class-I aminoacyl-tRNA synthetase family. MetG type 1 subfamily. In terms of assembly, homodimer. It depends on Zn(2+) as a cofactor.

It localises to the cytoplasm. The catalysed reaction is tRNA(Met) + L-methionine + ATP = L-methionyl-tRNA(Met) + AMP + diphosphate. Functionally, is required not only for elongation of protein synthesis but also for the initiation of all mRNA translation through initiator tRNA(fMet) aminoacylation. The sequence is that of Methionine--tRNA ligase from Methanosphaera stadtmanae (strain ATCC 43021 / DSM 3091 / JCM 11832 / MCB-3).